A 153-amino-acid polypeptide reads, in one-letter code: D-aminoacyl-tRNA deacylase (153 aa).

Residues 137–138 carry the Gly-cisPro motif, important for rejection of L-amino acids motif; it reads GP.

Belongs to the DTD family. As to quaternary structure, homodimer.

It localises to the cytoplasm. It catalyses the reaction glycyl-tRNA(Ala) + H2O = tRNA(Ala) + glycine + H(+). It carries out the reaction a D-aminoacyl-tRNA + H2O = a tRNA + a D-alpha-amino acid + H(+). Its function is as follows. An aminoacyl-tRNA editing enzyme that deacylates mischarged D-aminoacyl-tRNAs. Also deacylates mischarged glycyl-tRNA(Ala), protecting cells against glycine mischarging by AlaRS. Acts via tRNA-based rather than protein-based catalysis; rejects L-amino acids rather than detecting D-amino acids in the active site. By recycling D-aminoacyl-tRNA to D-amino acids and free tRNA molecules, this enzyme counteracts the toxicity associated with the formation of D-aminoacyl-tRNA entities in vivo and helps enforce protein L-homochirality. This chain is D-aminoacyl-tRNA deacylase, found in Dehalococcoides mccartyi (strain ATCC BAA-2100 / JCM 16839 / KCTC 5957 / BAV1).